The following is a 242-amino-acid chain: Probable transcriptional regulatory protein Cthe_2075 (242 aa).

Belongs to the TACO1 family.

It is found in the cytoplasm. This Acetivibrio thermocellus (strain ATCC 27405 / DSM 1237 / JCM 9322 / NBRC 103400 / NCIMB 10682 / NRRL B-4536 / VPI 7372) (Clostridium thermocellum) protein is Probable transcriptional regulatory protein Cthe_2075.